The following is a 68-amino-acid chain: Protein DsrB (68 aa).

The protein belongs to the DsrB family.

The protein is Protein DsrB of Sodalis glossinidius (strain morsitans).